The sequence spans 338 residues: DNA-directed RNA polymerase subunit alpha (338 aa).

Positions 1–234 (MIQKNWQELI…DQLNVFVNFE (234 aa)) are alpha N-terminal domain (alpha-NTD). Positions 250–338 (FNPALLKKVD…ELAKRFEEHY (89 aa)) are alpha C-terminal domain (alpha-CTD).

The protein belongs to the RNA polymerase alpha chain family. Homodimer. The RNAP catalytic core consists of 2 alpha, 1 beta, 1 beta' and 1 omega subunit. When a sigma factor is associated with the core the holoenzyme is formed, which can initiate transcription.

It carries out the reaction RNA(n) + a ribonucleoside 5'-triphosphate = RNA(n+1) + diphosphate. Functionally, DNA-dependent RNA polymerase catalyzes the transcription of DNA into RNA using the four ribonucleoside triphosphates as substrates. The sequence is that of DNA-directed RNA polymerase subunit alpha from Beijerinckia indica subsp. indica (strain ATCC 9039 / DSM 1715 / NCIMB 8712).